Here is a 229-residue protein sequence, read N- to C-terminus: Protein GrpE (229 aa).

Disordered regions lie at residues 1-49 (MTEG…SANS) and 207-229 (DSTA…EDGD). Over residues 13 to 24 (TDKRRIDPDTGE) the composition is skewed to basic and acidic residues.

This sequence belongs to the GrpE family. As to quaternary structure, homodimer.

Its subcellular location is the cytoplasm. Its function is as follows. Participates actively in the response to hyperosmotic and heat shock by preventing the aggregation of stress-denatured proteins, in association with DnaK and GrpE. It is the nucleotide exchange factor for DnaK and may function as a thermosensor. Unfolded proteins bind initially to DnaJ; upon interaction with the DnaJ-bound protein, DnaK hydrolyzes its bound ATP, resulting in the formation of a stable complex. GrpE releases ADP from DnaK; ATP binding to DnaK triggers the release of the substrate protein, thus completing the reaction cycle. Several rounds of ATP-dependent interactions between DnaJ, DnaK and GrpE are required for fully efficient folding. The sequence is that of Protein GrpE from Mycobacterium leprae (strain TN).